The chain runs to 289 residues: Acetyl-coenzyme A carboxylase carboxyl transferase subunit beta (289 aa).

The region spanning 28 to 289 (VMTKCPKCKK…QGGEMAVWQS (262 aa)) is the CoA carboxyltransferase N-terminal domain. Residues C32, C35, C51, and C54 each contribute to the Zn(2+) site. The C4-type zinc-finger motif lies at 32–54 (CPKCKKIMYTKEVLKNLKVCVNC).

The protein belongs to the AccD/PCCB family. Acetyl-CoA carboxylase is a heterohexamer composed of biotin carboxyl carrier protein (AccB), biotin carboxylase (AccC) and two subunits each of ACCase subunit alpha (AccA) and ACCase subunit beta (AccD). The cofactor is Zn(2+).

The protein localises to the cytoplasm. It carries out the reaction N(6)-carboxybiotinyl-L-lysyl-[protein] + acetyl-CoA = N(6)-biotinyl-L-lysyl-[protein] + malonyl-CoA. The protein operates within lipid metabolism; malonyl-CoA biosynthesis; malonyl-CoA from acetyl-CoA: step 1/1. Its function is as follows. Component of the acetyl coenzyme A carboxylase (ACC) complex. Biotin carboxylase (BC) catalyzes the carboxylation of biotin on its carrier protein (BCCP) and then the CO(2) group is transferred by the transcarboxylase to acetyl-CoA to form malonyl-CoA. In Bacillus cereus (strain ZK / E33L), this protein is Acetyl-coenzyme A carboxylase carboxyl transferase subunit beta.